The chain runs to 1141 residues: DNA polymerase II large subunit (1141 aa).

The tract at residues alanine 567–lysine 587 is disordered.

This sequence belongs to the archaeal DNA polymerase II family. Heterodimer of a large subunit and a small subunit.

It carries out the reaction DNA(n) + a 2'-deoxyribonucleoside 5'-triphosphate = DNA(n+1) + diphosphate. The enzyme catalyses Exonucleolytic cleavage in the 3'- to 5'-direction to yield nucleoside 5'-phosphates.. Functionally, possesses two activities: a DNA synthesis (polymerase) and an exonucleolytic activity that degrades single-stranded DNA in the 3'- to 5'-direction. Has a template-primer preference which is characteristic of a replicative DNA polymerase. This is DNA polymerase II large subunit from Methanocorpusculum labreanum (strain ATCC 43576 / DSM 4855 / Z).